A 367-amino-acid chain; its full sequence is uncharacterized protein (367 aa).

It is found in the mitochondrion. This is an uncharacterized protein from Paramecium tetraurelia.